A 212-amino-acid polypeptide reads, in one-letter code: Uracil phosphoribosyltransferase (212 aa).

5-phospho-alpha-D-ribose 1-diphosphate-binding positions include Arg78, Arg103, and 130 to 138 (DPMLATGSS). Residues Ile193 and 198-200 (GDA) contribute to the uracil site. Asp199 provides a ligand contact to 5-phospho-alpha-D-ribose 1-diphosphate.

The protein belongs to the UPRTase family. It depends on Mg(2+) as a cofactor.

The enzyme catalyses UMP + diphosphate = 5-phospho-alpha-D-ribose 1-diphosphate + uracil. Its pathway is pyrimidine metabolism; UMP biosynthesis via salvage pathway; UMP from uracil: step 1/1. With respect to regulation, allosterically activated by GTP. Catalyzes the conversion of uracil and 5-phospho-alpha-D-ribose 1-diphosphate (PRPP) to UMP and diphosphate. The protein is Uracil phosphoribosyltransferase of Pseudomonas savastanoi pv. phaseolicola (strain 1448A / Race 6) (Pseudomonas syringae pv. phaseolicola (strain 1448A / Race 6)).